A 338-amino-acid polypeptide reads, in one-letter code: MTVYYDKDCNINLIKSKKVAMIGFGSQGHAHAENLRDSGVEVVVGLRKDGSSWAKAEAKGFKVMTVGDASAYADLIMILLPDENQAEIYKDEIEPNLKNGATIAFGHGFNIHYGRIHPRADINVTMIAPKAPGHTVRSEFVRGGGIPDLIAVGQNPSGNTRELALSYASAIGGGRTAIIETTFKDETETDLFGEQAVLCGGAVSLVQAGFETLTEAGYAPELAYFECLHELKLIVDLMFQGGIADMRYSISNTAEYGDYVSGKRVINAESKAAMREILKEIQDGRFAKDFILEGQSGYPRMNAERANAKASLIEQTGVKLRTMMPWIAANKIVDTSKN.

One can recognise a KARI N-terminal Rossmann domain in the interval 1-181; sequence MTVYYDKDCN…GGGRTAIIET (181 aa). NADP(+) contacts are provided by residues 24–27, Arg47, Ser52, and 82–85; these read FGSQ and DENQ. His107 is an active-site residue. Gly133 provides a ligand contact to NADP(+). The 146-residue stretch at 182–327 folds into the KARI C-terminal knotted domain; it reads TFKDETETDL…VKLRTMMPWI (146 aa). The Mg(2+) site is built by Asp190, Glu194, Glu226, and Glu230. Ser251 provides a ligand contact to substrate.

This sequence belongs to the ketol-acid reductoisomerase family. The cofactor is Mg(2+).

It carries out the reaction (2R)-2,3-dihydroxy-3-methylbutanoate + NADP(+) = (2S)-2-acetolactate + NADPH + H(+). The enzyme catalyses (2R,3R)-2,3-dihydroxy-3-methylpentanoate + NADP(+) = (S)-2-ethyl-2-hydroxy-3-oxobutanoate + NADPH + H(+). The protein operates within amino-acid biosynthesis; L-isoleucine biosynthesis; L-isoleucine from 2-oxobutanoate: step 2/4. It participates in amino-acid biosynthesis; L-valine biosynthesis; L-valine from pyruvate: step 2/4. Its function is as follows. Involved in the biosynthesis of branched-chain amino acids (BCAA). Catalyzes an alkyl-migration followed by a ketol-acid reduction of (S)-2-acetolactate (S2AL) to yield (R)-2,3-dihydroxy-isovalerate. In the isomerase reaction, S2AL is rearranged via a Mg-dependent methyl migration to produce 3-hydroxy-3-methyl-2-ketobutyrate (HMKB). In the reductase reaction, this 2-ketoacid undergoes a metal-dependent reduction by NADPH to yield (R)-2,3-dihydroxy-isovalerate. This Sulfurimonas denitrificans (strain ATCC 33889 / DSM 1251) (Thiomicrospira denitrificans (strain ATCC 33889 / DSM 1251)) protein is Ketol-acid reductoisomerase (NADP(+)).